The following is a 195-amino-acid chain: Probable serine/threonine-protein kinase BUD32 homolog (195 aa).

The Protein kinase domain maps to Met-1–Gly-195. Lys-12 contributes to the ATP binding site. Asp-107 functions as the Proton acceptor in the catalytic mechanism.

It belongs to the protein kinase superfamily. Tyr protein kinase family. BUD32 subfamily.

It is found in the cytoplasm. The enzyme catalyses L-seryl-[protein] + ATP = O-phospho-L-seryl-[protein] + ADP + H(+). The catalysed reaction is L-threonyl-[protein] + ATP = O-phospho-L-threonyl-[protein] + ADP + H(+). Could be involved in the formation of a threonylcarbamoyl group on adenosine at position 37 (t(6)A37) in tRNAs that read codons beginning with adenine. This Archaeoglobus fulgidus (strain ATCC 49558 / DSM 4304 / JCM 9628 / NBRC 100126 / VC-16) protein is Probable serine/threonine-protein kinase BUD32 homolog.